The sequence spans 145 residues: D-aminoacyl-tRNA deacylase (145 aa).

Residues 137–138 carry the Gly-cisPro motif, important for rejection of L-amino acids motif; that stretch reads GP.

It belongs to the DTD family. As to quaternary structure, homodimer.

It is found in the cytoplasm. The enzyme catalyses glycyl-tRNA(Ala) + H2O = tRNA(Ala) + glycine + H(+). The catalysed reaction is a D-aminoacyl-tRNA + H2O = a tRNA + a D-alpha-amino acid + H(+). In terms of biological role, an aminoacyl-tRNA editing enzyme that deacylates mischarged D-aminoacyl-tRNAs. Also deacylates mischarged glycyl-tRNA(Ala), protecting cells against glycine mischarging by AlaRS. Acts via tRNA-based rather than protein-based catalysis; rejects L-amino acids rather than detecting D-amino acids in the active site. By recycling D-aminoacyl-tRNA to D-amino acids and free tRNA molecules, this enzyme counteracts the toxicity associated with the formation of D-aminoacyl-tRNA entities in vivo and helps enforce protein L-homochirality. This is D-aminoacyl-tRNA deacylase from Francisella tularensis subsp. holarctica (strain LVS).